Reading from the N-terminus, the 448-residue chain is Beclin-1 (448 aa).

Methionine 1 is modified (N-acetylmethionine). Phosphoserine is present on residues serine 14 and serine 29. The interval 47 to 72 (TTAQAKPGESQEEEANSGEEPFIETR) is disordered. Residues serine 88, serine 91, and serine 94 each carry the phosphoserine; by AMPK modification. Positions 106–125 (TMENLSRRLKVTGDLFDIMS) match the BH3 motif. The tract at residues 110-157 (LSRRLKVTGDLFDIMSGQTDVDHPLCEECTDTLLDQLDTQLNVTENEC) is interaction with BCL2 and BCL2L1 isoform Bcl-X(L). Phosphothreonine; by DAPK1 is present on threonine 117. Positions 140–267 (DTLLDQLDTQ…QLDKLKKTNV (128 aa)) form a coiled coil. The interval 243–448 (DELKSVENQM…AWVSSQFYNK (206 aa)) is evolutionary conserved domain (ECD). Glycyl lysine isopeptide (Lys-Gly) (interchain with G-Cter in ubiquitin) cross-links involve residues lysine 400 and lysine 435. Residues 423–448 (WTKALKFMLTNLKWGLAWVSSQFYNK) form a required for membrane-association region.

Belongs to the beclin family. In terms of assembly, a homodimeric form is proposed to exist; this metastable form readily transits to ATG14- or UVRAG-containing complexes with BECN1:UVRAG being more stable than BECN1:ATG14. Component of the PI3K (PI3KC3/PI3K-III/class III phosphatidylinositol 3-kinase) complex the core of which is composed of the catalytic subunit PIK3C3, the regulatory subunit PIK3R4 and BECN1 associating with additional regulatory/auxiliary subunits to form alternative complex forms. Alternative complex forms containing a fourth regulatory subunit in a mutually exclusive manner are PI3K complex I (PI3KC3-C1) containing ATG14, and PI3K complex II (PI3KC3-C2) containing UVRAG. PI3KC3-C1 displays a V-shaped architecture with PIK3R4 serving as a bridge between PIK3C3 and the ATG14:BECN1 subcomplex. Both, PI3KC3-C1 and PI3KC3-C2, can associate with further regulatory subunits, such as RUBCN, SH3GLB1/Bif-1 and AMBRA1. PI3KC3-C1 probably associates with PIK3CB. Forms a complex with PPP2CA and AMBRA1; AMBRA1 and BECN1 components of the complex regulate MYC stability via different pathways. Component of the complex, at least composed of LRPPRC, BECN1 and BCL2; the interactions prevent BECN1 from forming an autophagy-inducing complex with PIK3C3. Interacts with AMBRA1, GOPC, GRID2. Interacts with BCL2 and BCL2L1 isoform Bcl-X(L); the interaction inhibits BECN1 function in promoting autophagy by interfering with the formation of the PI3K complex. Interacts with cytosolic HMGB1; inhibits the interaction of BECN1 and BCL2 leading to promotion of autophagy. Interacts with USP10, USP13, DAPK1, RAB39A. Interacts with SLAMF1. Interacts with the poly-Gln domain of ATXN3; the interaction causes deubiquitination at Lys-400 and stabilizes BECN1. Interacts with VMP1. Interacts with TRIM5; the interaction causes activation of BECN1 by causing its dissociation from its inhibitors BCL2 and TAB2. Interacts with active ULK1 (phosphorylated on 'Ser-317') and MEFV simultaneously. Interacts with WDR81 and WDR91; negatively regulates the PI3 kinase/PI3K activity associated with endosomal membranes. Interacts with LAPTM4B; competes with EGFR for LAPTM4B binding; regulates EGFR activity. Interacts with TRIM50. Interacts with TRIM16. Interacts with ATG14; this interaction is increased in the absence of TMEM39A. Interacts with WASHC1; preventing interaction with AMBRA1 and the DCX(AMBRA1) complex and subsequent ubiquitination. Interacts with TRIM17. Interacts with BCL2L10/BCL-B (via BH1 domain). Interacts with SH3BGRL. Interacts with IRGM; enhancing BECN1-interacting partners and influencing the composition of the BECN1 complex. Interacts with ARMC3. Interacts with LRPPRC. Post-translationally, phosphorylation at Thr-117 by DAPK1 reduces its interaction with BCL2 and BCL2L1 and promotes induction of autophagy. In response to autophagic stimuli, phosphorylated at serine residues by AMPK in an ATG14-dependent manner, and this phosphorylation is critical for maximally efficient autophagy. Polyubiquitinated by NEDD4, both with 'Lys-11'- and 'Lys-63'-linkages. 'Lys-11'-linked polyubiquitination leads to degradation and is enhanced when the stabilizing interaction partner VPS34 is depleted. Deubiquitinated by USP10 and USP13, leading to stabilize the PIK3C3/VPS34-containing complexes. Polyubiquitinated at Lys-400 with 'Lys-48'-linkages. 'Lys-48'-linked polyubiquitination of Lys-400 leads to degradation. Deubiquitinated by ATXN3, leading to stabilization. Ubiquitinated at Lys-435 via 'Lys-63'-linkage by the DCX(AMBRA1) complex, thereby increasing the association between BECN1 and PIK3C3 to promote PIK3C3 activity. 'Lys-48'-linked ubiquitination by RNF216 leads to proteasomal degradation and autophagy inhibition. In terms of processing, proteolytically processed by caspases including CASP8 and CASP3; the C-terminal fragments lack autophagy-inducing capacity and are proposed to induce apoptosis. Thus the cleavage is proposed to be an determinant to switch from autophagy to apoptosis pathways affecting cellular homeostasis including viral infections and survival of tumor cells.

It localises to the cytoplasm. It is found in the golgi apparatus. The protein resides in the trans-Golgi network membrane. The protein localises to the endosome membrane. Its subcellular location is the endoplasmic reticulum membrane. It localises to the mitochondrion membrane. It is found in the cytoplasmic vesicle. The protein resides in the autophagosome. The protein localises to the mitochondrion. Its subcellular location is the nucleus. Functionally, plays a central role in autophagy. Acts as a core subunit of the PI3K complex that mediates formation of phosphatidylinositol 3-phosphate; different complex forms are believed to play a role in multiple membrane trafficking pathways: PI3KC3-C1 is involved in initiation of autophagosomes and PI3KC3-C2 in maturation of autophagosomes and endocytosis. Involved in regulation of degradative endocytic trafficking and required for the abscission step in cytokinesis, probably in the context of PI3KC3-C2. Essential for the formation of PI3KC3-C2 but not PI3KC3-C1 PI3K complex forms. Involved in endocytosis. May play a role in antiviral host defense. Its function is as follows. Beclin-1-C 35 kDa localized to mitochondria can promote apoptosis; it induces the mitochondrial translocation of BAX and the release of proapoptotic factors. This chain is Beclin-1 (Becn1), found in Rattus norvegicus (Rat).